A 279-amino-acid chain; its full sequence is Arabinooligosaccharides transport system permease protein AraQ (279 aa).

The next 6 membrane-spanning stretches (helical) occupy residues 8-28 (ILSW…VFPL), 79-99 (VWIS…VGYA), 110-130 (FFFL…MLPL), 140-160 (VNTY…VFFF), 184-204 (GIFF…MAIL), and 245-265 (ILLA…IFFQ). The 190-residue stretch at 75 to 264 (FGNSVWISIV…VPIVILFIFF (190 aa)) folds into the ABC transmembrane type-1 domain.

This sequence belongs to the binding-protein-dependent transport system permease family. MalFG subfamily. The complex is composed of two ATP-binding proteins (MsmX), two transmembrane proteins (AraP and AraQ) and a solute-binding protein (AraN).

It is found in the cell membrane. Functionally, part of the ABC transporter complex AraNPQ involved in the uptake of arabinooligosaccharides. Responsible for the translocation of the substrate across the membrane. This is Arabinooligosaccharides transport system permease protein AraQ (araQ) from Halalkalibacterium halodurans (strain ATCC BAA-125 / DSM 18197 / FERM 7344 / JCM 9153 / C-125) (Bacillus halodurans).